A 394-amino-acid chain; its full sequence is NAD(P)H-quinone oxidoreductase subunit H (394 aa).

This sequence belongs to the complex I 49 kDa subunit family. As to quaternary structure, NDH-1 can be composed of about 15 different subunits; different subcomplexes with different compositions have been identified which probably have different functions.

It is found in the cellular thylakoid membrane. The catalysed reaction is a plastoquinone + NADH + (n+1) H(+)(in) = a plastoquinol + NAD(+) + n H(+)(out). It catalyses the reaction a plastoquinone + NADPH + (n+1) H(+)(in) = a plastoquinol + NADP(+) + n H(+)(out). NDH-1 shuttles electrons from an unknown electron donor, via FMN and iron-sulfur (Fe-S) centers, to quinones in the respiratory and/or the photosynthetic chain. The immediate electron acceptor for the enzyme in this species is believed to be plastoquinone. Couples the redox reaction to proton translocation, and thus conserves the redox energy in a proton gradient. Cyanobacterial NDH-1 also plays a role in inorganic carbon-concentration. This chain is NAD(P)H-quinone oxidoreductase subunit H, found in Synechococcus sp. (strain RCC307).